We begin with the raw amino-acid sequence, 553 residues long: Arginine--tRNA ligase (553 aa).

The 'HIGH' region signature appears at 130-140; it reads ANPTGDLHIGH.

It belongs to the class-I aminoacyl-tRNA synthetase family. Monomer.

It localises to the cytoplasm. It carries out the reaction tRNA(Arg) + L-arginine + ATP = L-arginyl-tRNA(Arg) + AMP + diphosphate. This chain is Arginine--tRNA ligase, found in Staphylococcus epidermidis (strain ATCC 35984 / DSM 28319 / BCRC 17069 / CCUG 31568 / BM 3577 / RP62A).